The following is a 323-amino-acid chain: NADH-ubiquinone oxidoreductase chain 1 (323 aa).

8 helical membrane-spanning segments follow: residues 8–28, 74–94, 105–125, 150–170, 176–196, 227–247, 258–278, and 298–318; these read LLNP…LTLI, LLFI…WLPL, LGML…LGSG, SLGL…LTTF, TIWL…STLA, LFFL…TILF, ELTS…FLWV, and FLPI…FTGS.

Belongs to the complex I subunit 1 family.

It localises to the mitochondrion inner membrane. The enzyme catalyses a ubiquinone + NADH + 5 H(+)(in) = a ubiquinol + NAD(+) + 4 H(+)(out). In terms of biological role, core subunit of the mitochondrial membrane respiratory chain NADH dehydrogenase (Complex I) that is believed to belong to the minimal assembly required for catalysis. Complex I functions in the transfer of electrons from NADH to the respiratory chain. The immediate electron acceptor for the enzyme is believed to be ubiquinone. The protein is NADH-ubiquinone oxidoreductase chain 1 (MT-ND1) of Latimeria chalumnae (Coelacanth).